The chain runs to 424 residues: Histidine--tRNA ligase (424 aa).

Belongs to the class-II aminoacyl-tRNA synthetase family. In terms of assembly, homodimer.

It is found in the cytoplasm. It catalyses the reaction tRNA(His) + L-histidine + ATP = L-histidyl-tRNA(His) + AMP + diphosphate + H(+). The protein is Histidine--tRNA ligase of Desulfitobacterium hafniense (strain DSM 10664 / DCB-2).